We begin with the raw amino-acid sequence, 466 residues long: Probable Xaa-Pro aminopeptidase pepP (466 aa).

Asp-264, Asp-275, Glu-398, and Glu-438 together coordinate Mn(2+).

Belongs to the peptidase M24B family. It depends on Mn(2+) as a cofactor.

It catalyses the reaction Release of any N-terminal amino acid, including proline, that is linked to proline, even from a dipeptide or tripeptide.. Catalyzes the removal of a penultimate prolyl residue from the N-termini of peptides. The chain is Probable Xaa-Pro aminopeptidase pepP (pepP) from Aspergillus clavatus (strain ATCC 1007 / CBS 513.65 / DSM 816 / NCTC 3887 / NRRL 1 / QM 1276 / 107).